Consider the following 426-residue polypeptide: Serine--tRNA ligase (426 aa).

Residue 233-235 (TAE) participates in L-serine binding. Position 264 to 266 (264 to 266 (RSE)) interacts with ATP. Residue Glu-287 participates in L-serine binding. 351–354 (EISS) contributes to the ATP binding site. Ser-387 serves as a coordination point for L-serine.

This sequence belongs to the class-II aminoacyl-tRNA synthetase family. Type-1 seryl-tRNA synthetase subfamily. Homodimer. The tRNA molecule binds across the dimer.

It is found in the cytoplasm. The catalysed reaction is tRNA(Ser) + L-serine + ATP = L-seryl-tRNA(Ser) + AMP + diphosphate + H(+). It carries out the reaction tRNA(Sec) + L-serine + ATP = L-seryl-tRNA(Sec) + AMP + diphosphate + H(+). The protein operates within aminoacyl-tRNA biosynthesis; selenocysteinyl-tRNA(Sec) biosynthesis; L-seryl-tRNA(Sec) from L-serine and tRNA(Sec): step 1/1. Catalyzes the attachment of serine to tRNA(Ser). Is also able to aminoacylate tRNA(Sec) with serine, to form the misacylated tRNA L-seryl-tRNA(Sec), which will be further converted into selenocysteinyl-tRNA(Sec). This Pseudomonas syringae pv. syringae (strain B728a) protein is Serine--tRNA ligase.